The primary structure comprises 257 residues: Phosphatidylglycerol--prolipoprotein diacylglyceryl transferase (257 aa).

Helical transmembrane passes span 13-33 (FGPI…AVGG), 49-69 (FLLN…RLMF), 88-108 (IYEG…AGLY), 123-143 (FAVV…IFNH), 152-172 (FFFG…FLLI), 186-202 (YQFW…RGVF), and 223-243 (IGLF…AYWM). Arg136 provides a ligand contact to a 1,2-diacyl-sn-glycero-3-phospho-(1'-sn-glycerol).

It belongs to the Lgt family.

The protein localises to the cell membrane. It carries out the reaction L-cysteinyl-[prolipoprotein] + a 1,2-diacyl-sn-glycero-3-phospho-(1'-sn-glycerol) = an S-1,2-diacyl-sn-glyceryl-L-cysteinyl-[prolipoprotein] + sn-glycerol 1-phosphate + H(+). It participates in protein modification; lipoprotein biosynthesis (diacylglyceryl transfer). In terms of biological role, catalyzes the transfer of the diacylglyceryl group from phosphatidylglycerol to the sulfhydryl group of the N-terminal cysteine of a prolipoprotein, the first step in the formation of mature lipoproteins. This Caldanaerobacter subterraneus subsp. tengcongensis (strain DSM 15242 / JCM 11007 / NBRC 100824 / MB4) (Thermoanaerobacter tengcongensis) protein is Phosphatidylglycerol--prolipoprotein diacylglyceryl transferase.